Reading from the N-terminus, the 268-residue chain is Hydroxypyruvate/pyruvate aldolase (268 aa).

His-48 acts as the Proton acceptor in catalysis. A divalent metal cation is bound by residues Glu-152 and Asp-178.

It belongs to the HpcH/HpaI aldolase family. Mn(2+) serves as cofactor. Mg(2+) is required as a cofactor. It depends on Co(2+) as a cofactor.

It carries out the reaction D-glyceraldehyde + 3-hydroxypyruvate = (3R,4S,5R)-3,4,5,6-tetrahydroxy-2-oxohexanoate. The catalysed reaction is D-glyceraldehyde + 3-hydroxypyruvate = 2-dehydro-D-gluconate. It catalyses the reaction D-glyceraldehyde + 3-hydroxypyruvate = 2-dehydro-D-galactonate. The enzyme catalyses D-glyceraldehyde + pyruvate = 2-dehydro-3-deoxy-L-galactonate. It carries out the reaction 2-dehydro-3-deoxy-D-gluconate = D-glyceraldehyde + pyruvate. Aldolase which can catalyze in vitro the aldolisation reaction between hydroxypyruvate (HPA) or pyruvate (PA) and D-glyceraldehyde (D-GA). The condensation of hydroxypyruvate and D-glyceraldehyde produces (3R,4S,5R)-3,4,5,6-tetrahydroxy-2-oxohexanoate as the major product, 2-dehydro-D-gluconate and 2-dehydro-D-galactonate. The condensation of pyruvate and D-glyceraldehyde produces 2-dehydro-3-deoxy-L-galactonate as the major product and 2-dehydro-3-deoxy-D-gluconate. Also catalyzes the retro-aldol type decarboxylation of oxaloacetate, a general property of known pyruvate aldolases. The polypeptide is Hydroxypyruvate/pyruvate aldolase (Pseudomonas aeruginosa).